Reading from the N-terminus, the 690-residue chain is Protein arginine N-methyltransferase 7 (690 aa).

2 SAM-dependent MTase PRMT-type domains span residues Gln14 to Trp357 and Thr366 to Leu690.

This sequence belongs to the class I-like SAM-binding methyltransferase superfamily. Protein arginine N-methyltransferase family. PRMT7 subfamily.

In terms of biological role, essential arginine methyltransferase that can both catalyze the formation of omega-N monomethylarginine (MMA) and symmetrical dimethylarginine (sDMA). Specifically mediates the symmetrical dimethylation of arginine residues in the small nuclear ribonucleoproteins SmD1 and SmD3. The sequence is that of Protein arginine N-methyltransferase 7 (Art7) from Drosophila erecta (Fruit fly).